The sequence spans 184 residues: (2E)-enoyl-[ACP] glycyltransferase (184 aa).

It belongs to the FcoT family.

The enzyme catalyses a (3R)-3-[(carboxymethyl)amino]fatty acid + holo-[ACP] + H(+) = a (2E)-enoyl-[ACP] + glycine + H2O. It catalyses the reaction (3R)-3-[(carboxylmethyl)amino]decanoate + holo-[ACP] + H(+) = (2E)-decenoyl-[ACP] + glycine + H2O. Involved in the biosynthesis of a unique class of isonitrile lipopeptides (INLPs) that seem to play a role in metal acquisition in M.marinum. Catalyzes a Michael addition of glycine to the beta-position of an alpha,beta-unsaturated fatty acyl-[ACP], producing a (3R)-3-[(carboxymethyl)amino]fatty acid. Acts on the (2E)-decenoyl moiety loaded on the acyl-carrier protein MmaB, forming the product (3R)-3-[(carboxymethyl)amino]decanoate released from MmaB. The protein is (2E)-enoyl-[ACP] glycyltransferase of Mycobacterium marinum (strain ATCC BAA-535 / M).